A 509-amino-acid chain; its full sequence is Probable basic-leucine zipper transcription factor H (509 aa).

A disordered region spans residues 1-42 (MMNSPRSLDSSDGSVDSSSVYSGTSSFGSSFTSSTGSGFTNS). Residues 10-39 (SSDGSVDSSSVYSGTSSFGSSFTSSTGSGF) show a composition bias toward low complexity. One can recognise a bZIP domain in the interval 50 to 113 (AKKKKIRQMQ…NENYLKINQL (64 aa)). The basic motif stretch occupies residues 51–77 (KKKKIRQMQNRQSAAQYRERKKEYLEK). Residues 78–99 (LETIVDNLESDRNQLLQQTKQL) are leucine-zipper. Disordered stretches follow at residues 134–185 (LLSK…SNNG), 223–275 (FSHL…SRFN), 290–414 (IENV…IINN), and 465–509 (SNNN…GIPK). Low complexity-rich tracts occupy residues 226–248 (LQQQ…SPIP), 255–269 (PIQQ…QNIN), 292–350 (NVNN…SNRS), 361–414 (QQQQ…IINN), 465–483 (SNNN…NSPS), and 490–509 (NGGI…GIPK).

It belongs to the bZIP family.

Its subcellular location is the nucleus. Its function is as follows. Probable transcriptional regulator. This Dictyostelium discoideum (Social amoeba) protein is Probable basic-leucine zipper transcription factor H (bzpH).